A 414-amino-acid chain; its full sequence is 2,3-diketo-5-methylthiopentyl-1-phosphate enolase (414 aa).

Residue K99 is the Proton acceptor of the active site. Substrate contacts are provided by residues K148, 174-177, H265, G338, and 360-361; these read KDDE and GG. Residues K174, D176, and E177 each contribute to the Mg(2+) site. K174 carries the post-translational modification N6-carboxylysine.

Belongs to the RuBisCO large chain family. Type IV subfamily. In terms of assembly, homodimer. It depends on Mg(2+) as a cofactor.

It catalyses the reaction 5-methylsulfanyl-2,3-dioxopentyl phosphate = 2-hydroxy-5-methylsulfanyl-3-oxopent-1-enyl phosphate. Its pathway is amino-acid biosynthesis; L-methionine biosynthesis via salvage pathway; L-methionine from S-methyl-5-thio-alpha-D-ribose 1-phosphate: step 3/6. Catalyzes the enolization of 2,3-diketo-5-methylthiopentyl-1-phosphate (DK-MTP-1-P) into 2-hydroxy-3-keto-5-methylthiopentenyl-1-phosphate (HK-MTPenyl-1-P). In Bacillus cereus (strain Q1), this protein is 2,3-diketo-5-methylthiopentyl-1-phosphate enolase.